The chain runs to 466 residues: Cysteine--tRNA ligase (466 aa).

C28 serves as a coordination point for Zn(2+). Positions 30–40 match the 'HIGH' region motif; sequence PTVYNFFHIGN. Zn(2+)-binding residues include C208, H233, and E237. The 'KMSKS' region signature appears at 265-269; the sequence is KMSKS. An ATP-binding site is contributed by K268.

This sequence belongs to the class-I aminoacyl-tRNA synthetase family. Monomer. The cofactor is Zn(2+).

It is found in the cytoplasm. The catalysed reaction is tRNA(Cys) + L-cysteine + ATP = L-cysteinyl-tRNA(Cys) + AMP + diphosphate. The protein is Cysteine--tRNA ligase of Clostridium perfringens (strain 13 / Type A).